A 159-amino-acid polypeptide reads, in one-letter code: Small ribosomal subunit protein uS4 (159 aa).

The S4 RNA-binding domain maps to 106-158 (RRLQTLVFRMGLAKSIHHARQLVVHGHVLVAGRRVTSPGFLVPRELEDKITIE).

The protein belongs to the universal ribosomal protein uS4 family. Part of the 30S ribosomal subunit. Contacts protein S5. The interaction surface between S4 and S5 is involved in control of translational fidelity.

In terms of biological role, one of the primary rRNA binding proteins, it binds directly to 16S rRNA where it nucleates assembly of the body of the 30S subunit. Functionally, with S5 and S12 plays an important role in translational accuracy. In Pyrobaculum calidifontis (strain DSM 21063 / JCM 11548 / VA1), this protein is Small ribosomal subunit protein uS4.